Here is a 518-residue protein sequence, read N- to C-terminus: Chromosomal replication initiator protein DnaA (518 aa).

Residues methionine 1–serine 72 are domain I, interacts with DnaA modulators. The domain II stretch occupies residues serine 72–threonine 180. The segment at glutamate 145–alanine 172 is disordered. Residues asparagine 181–serine 397 are domain III, AAA+ region. ATP contacts are provided by glycine 225, glycine 227, lysine 228, and threonine 229. The segment at arginine 398–asparagine 518 is domain IV, binds dsDNA.

Belongs to the DnaA family. Oligomerizes as a right-handed, spiral filament on DNA at oriC.

It localises to the cytoplasm. Functionally, plays an essential role in the initiation and regulation of chromosomal replication. ATP-DnaA binds to the origin of replication (oriC) to initiate formation of the DNA replication initiation complex once per cell cycle. Binds the DnaA box (a 9 base pair repeat at the origin) and separates the double-stranded (ds)DNA. Forms a right-handed helical filament on oriC DNA; dsDNA binds to the exterior of the filament while single-stranded (ss)DNA is stabiized in the filament's interior. The ATP-DnaA-oriC complex binds and stabilizes one strand of the AT-rich DNA unwinding element (DUE), permitting loading of DNA polymerase. After initiation quickly degrades to an ADP-DnaA complex that is not apt for DNA replication. Binds acidic phospholipids. This chain is Chromosomal replication initiator protein DnaA, found in Neisseria meningitidis serogroup B (strain ATCC BAA-335 / MC58).